The sequence spans 310 residues: tRNA pseudouridine synthase B (310 aa).

Catalysis depends on Asp-47, which acts as the Nucleophile.

Belongs to the pseudouridine synthase TruB family. Type 1 subfamily.

It catalyses the reaction uridine(55) in tRNA = pseudouridine(55) in tRNA. Functionally, responsible for synthesis of pseudouridine from uracil-55 in the psi GC loop of transfer RNAs. In Caulobacter vibrioides (strain ATCC 19089 / CIP 103742 / CB 15) (Caulobacter crescentus), this protein is tRNA pseudouridine synthase B.